The primary structure comprises 208 residues: Large ribosomal subunit protein uL3 (208 aa).

It belongs to the universal ribosomal protein uL3 family. Part of the 50S ribosomal subunit. Forms a cluster with proteins L14 and L19.

Its function is as follows. One of the primary rRNA binding proteins, it binds directly near the 3'-end of the 23S rRNA, where it nucleates assembly of the 50S subunit. This Desulfosudis oleivorans (strain DSM 6200 / JCM 39069 / Hxd3) (Desulfococcus oleovorans) protein is Large ribosomal subunit protein uL3.